The primary structure comprises 470 residues: Trigger factor (470 aa).

The PPIase FKBP-type domain maps to 164–243 (GDYVVIDMTA…VTAVKVQELP (80 aa)). 2 stretches are compositionally biased toward acidic residues: residues 424–438 (ETDA…ESVE) and 445–470 (AEDD…AAKA). Residues 424 to 470 (ETDAEDAAEGVESVEVDLSAAAEDDAEETSDEPAAEDTATEDEAAKA) form a disordered region.

It belongs to the FKBP-type PPIase family. Tig subfamily.

The protein localises to the cytoplasm. It catalyses the reaction [protein]-peptidylproline (omega=180) = [protein]-peptidylproline (omega=0). Functionally, involved in protein export. Acts as a chaperone by maintaining the newly synthesized protein in an open conformation. Functions as a peptidyl-prolyl cis-trans isomerase. The polypeptide is Trigger factor (Beutenbergia cavernae (strain ATCC BAA-8 / DSM 12333 / CCUG 43141 / JCM 11478 / NBRC 16432 / NCIMB 13614 / HKI 0122)).